Reading from the N-terminus, the 190-residue chain is Threonylcarbamoyl-AMP synthase (190 aa).

A YrdC-like domain is found at 7 to 190 (GDAIAAAIDV…ALTGELFRQG (184 aa)).

It belongs to the SUA5 family. TsaC subfamily.

The protein localises to the cytoplasm. The catalysed reaction is L-threonine + hydrogencarbonate + ATP = L-threonylcarbamoyladenylate + diphosphate + H2O. Functionally, required for the formation of a threonylcarbamoyl group on adenosine at position 37 (t(6)A37) in tRNAs that read codons beginning with adenine. Catalyzes the conversion of L-threonine, HCO(3)(-)/CO(2) and ATP to give threonylcarbamoyl-AMP (TC-AMP) as the acyladenylate intermediate, with the release of diphosphate. The sequence is that of Threonylcarbamoyl-AMP synthase from Shigella boydii serotype 4 (strain Sb227).